Reading from the N-terminus, the 270-residue chain is Putative phosphatase YxeH (270 aa).

Asp-8 serves as the catalytic Nucleophile. Asp-8 is a binding site for Mg(2+). Met-9 is a binding site for phosphate. Asp-10 is a Mg(2+) binding site. Phosphate-binding positions include 42–43 (TG) and Lys-196. Position 219 (Asp-219) interacts with Mg(2+). A phosphate-binding site is contributed by Asn-222.

Belongs to the HAD-like hydrolase superfamily. Cof family. Requires Mg(2+) as cofactor.

This is Putative phosphatase YxeH (yxeH) from Bacillus subtilis (strain 168).